The sequence spans 691 residues: Elongation factor G (691 aa).

In terms of domain architecture, tr-type G spans 8–283 (KKVRNIGIAA…AVVAYLPAPD (276 aa)). GTP is bound by residues 17-24 (AHIDAGKT), 81-85 (DTPGH), and 135-138 (NKMD).

It belongs to the TRAFAC class translation factor GTPase superfamily. Classic translation factor GTPase family. EF-G/EF-2 subfamily.

It localises to the cytoplasm. Functionally, catalyzes the GTP-dependent ribosomal translocation step during translation elongation. During this step, the ribosome changes from the pre-translocational (PRE) to the post-translocational (POST) state as the newly formed A-site-bound peptidyl-tRNA and P-site-bound deacylated tRNA move to the P and E sites, respectively. Catalyzes the coordinated movement of the two tRNA molecules, the mRNA and conformational changes in the ribosome. This chain is Elongation factor G, found in Campylobacter jejuni subsp. doylei (strain ATCC BAA-1458 / RM4099 / 269.97).